Consider the following 352-residue polypeptide: Zinc transporter 1 (352 aa).

The signal sequence occupies residues 1-29; it reads MARTMTMRVSSLLVAVVLLAALSFQACSG. Over 30-56 the chain is Extracellular; it reads HGGINDGDGQVDAPATPASSSGVRSKG. The helical transmembrane segment at 57–77 threads the bilayer; that stretch reads LIAVKVWCLVILLVFTFAGGV. Residues 78–87 lie on the Cytoplasmic side of the membrane; that stretch reads SPYFYRWNES. The chain crosses the membrane as a helical span at residues 88 to 108; the sequence is FLLLGTQFAAGVFLGTALMHF. Residues 109–127 lie on the Extracellular side of the membrane; sequence LADSTSTFKGLTTNQYPFS. A helical membrane pass occupies residues 128-148; the sequence is FMLTCVGFLLTMLSDLVIAAV. Residues 149-200 lie on the Cytoplasmic side of the membrane; that stretch reads ARRSAAAGVSDNQVSEQQQRQQAEGAVMSRKEEEAAAVAHPAMLVRTSSFED. Residues 201 to 221 form a helical membrane-spanning segment; that stretch reads AVLLIVALCFHSVFEGIAIGV. Over 222-230 the chain is Extracellular; it reads SASKSEAWR. The helical transmembrane segment at 231-251 threads the bilayer; that stretch reads NLWTIGLHKIFAAVAMGIALL. The Cytoplasmic segment spans residues 252 to 262; the sequence is RMIPKRPFLMT. A helical transmembrane segment spans residues 263-283; sequence VVYSLAFAVSSPVGVGIGIAI. Over 284–296 the chain is Extracellular; that stretch reads DATSQGRAADWTY. The chain crosses the membrane as a helical span at residues 297–317; that stretch reads AISMGLATGVFIYVAINHLIA. Topologically, residues 318-330 are cytoplasmic; sequence KGYRPHHPTAADK. The chain crosses the membrane as a helical span at residues 331–351; the sequence is PLFKFLAVLLGVAVMAVVMIW. A topological domain (extracellular) is located at residue Asp-352.

The protein belongs to the ZIP transporter (TC 2.A.5) family. As to expression, expressed in vascular bundles of roots and leaves.

It localises to the cell membrane. Zinc transporter that may mediate zinc uptake from the rhizosphere. May also transport other divalent cations. The chain is Zinc transporter 1 (ZIP1) from Oryza sativa subsp. japonica (Rice).